The sequence spans 95 residues: Protein TusB (95 aa).

Belongs to the DsrH/TusB family. In terms of assembly, heterohexamer, formed by a dimer of trimers. The hexameric TusBCD complex contains 2 copies each of TusB, TusC and TusD. The TusBCD complex interacts with TusE.

The protein localises to the cytoplasm. Functionally, part of a sulfur-relay system required for 2-thiolation of 5-methylaminomethyl-2-thiouridine (mnm(5)s(2)U) at tRNA wobble positions. The protein is Protein TusB of Buchnera aphidicola subsp. Acyrthosiphon pisum (strain 5A).